The primary structure comprises 89 residues: MSVADINKQEVVKQFARGTNDTGSPEVQVALLTARINELTPHFKAHMKDHHSRRGLLKMVSRRRRLLDYLKKNDADRYRSLIEKLGLRK.

The protein belongs to the universal ribosomal protein uS15 family. Part of the 30S ribosomal subunit. Forms a bridge to the 50S subunit in the 70S ribosome, contacting the 23S rRNA.

Its function is as follows. One of the primary rRNA binding proteins, it binds directly to 16S rRNA where it helps nucleate assembly of the platform of the 30S subunit by binding and bridging several RNA helices of the 16S rRNA. Forms an intersubunit bridge (bridge B4) with the 23S rRNA of the 50S subunit in the ribosome. In Ralstonia nicotianae (strain ATCC BAA-1114 / GMI1000) (Ralstonia solanacearum), this protein is Small ribosomal subunit protein uS15.